The sequence spans 91 residues: C-C motif chemokine 5 (91 aa).

The signal sequence occupies residues 1–23 (MKVSAARLAVILVATALCAPASA). 2 cysteine pairs are disulfide-bonded: cysteine 33–cysteine 57 and cysteine 34–cysteine 73.

This sequence belongs to the intercrine beta (chemokine CC) family.

It is found in the secreted. In terms of biological role, chemoattractant for blood monocytes, memory T-helper cells and eosinophils. Causes the release of histamine from basophils and activates eosinophils. May activate several chemokine receptors including CCR1, CCR3, CCR4 and CCR5. May also be an agonist of the G protein-coupled receptor GPR75. Together with GPR75, may play a role in neuron survival through activation of a downstream signaling pathway involving the PI3, Akt and MAP kinases. By activating GPR75 may also play a role in insulin secretion by islet cells. The sequence is that of C-C motif chemokine 5 (CCL5) from Macaca mulatta (Rhesus macaque).